The primary structure comprises 990 residues: Aconitate hydratase 3, mitochondrial (990 aa).

A mitochondrion-targeting transit peptide spans 1–78 (MYLTASSSAS…PFRFTSQIRA (78 aa)). The residue at position 91 (Ser-91) is a Phosphoserine. Residues Gln-182 and 301-303 (DSH) each bind substrate. Positions 533, 599, and 602 each coordinate [4Fe-4S] cluster. Substrate contacts are provided by residues Arg-632, Arg-637, Arg-795, and 876–877 (SR).

It belongs to the aconitase/IPM isomerase family. Monomer. Interacts with B'GAMMA in the cytosol. [4Fe-4S] cluster is required as a cofactor. Phosphorylated at Ser-91 in the cytoplasm; this phosphorylation requires the presence of B'GAMMA. Major aconitase isoenzyme in young seedlings. Expressed in roots, leaves, stems and flowers, and, at low levels, in seeds.

It is found in the mitochondrion. The protein resides in the cytoplasm. The catalysed reaction is citrate = D-threo-isocitrate. Its pathway is carbohydrate metabolism; tricarboxylic acid cycle; isocitrate from oxaloacetate: step 2/2. Functionally, catalyzes the isomerization of citrate to isocitrate via cis-aconitate. Contributes to oxidative stress tolerance. Modulates cytosolic citrate metabolism during lipid mobilization. Required during seedling growth. The polypeptide is Aconitate hydratase 3, mitochondrial (Arabidopsis thaliana (Mouse-ear cress)).